The chain runs to 211 residues: Probable nicotinate-nucleotide adenylyltransferase (211 aa).

The protein belongs to the NadD family.

The enzyme catalyses nicotinate beta-D-ribonucleotide + ATP + H(+) = deamido-NAD(+) + diphosphate. Its pathway is cofactor biosynthesis; NAD(+) biosynthesis; deamido-NAD(+) from nicotinate D-ribonucleotide: step 1/1. In terms of biological role, catalyzes the reversible adenylation of nicotinate mononucleotide (NaMN) to nicotinic acid adenine dinucleotide (NaAD). The polypeptide is Probable nicotinate-nucleotide adenylyltransferase (Thermoanaerobacter sp. (strain X514)).